Reading from the N-terminus, the 638-residue chain is Voltage-gated potassium channel KCNC2 (638 aa).

Topologically, residues 1–229 (MGKIENNERV…EDPYSSRAAR (229 aa)) are cytoplasmic. Residues 47 to 75 (LTAAGDKLQPLPPPLSPPPRPPPLSPVPS) are disordered. Pro residues predominate over residues 56–72 (PLPPPLSPPPRPPPLSP). 4 residues coordinate Zn(2+): His124, Cys130, Cys151, and Cys152. The helical transmembrane segment at 230–248 (FIAFASLFFILVSITTFCL) threads the bilayer. N-linked (GlcNAc...) asparagine glycans are attached at residues Asn259 and Asn266. A helical transmembrane segment spans residues 284–303 (YVEGVCVVWFTFEFLVRIVF). Residues 304 to 314 (SPNKLEFIKNL) are Cytoplasmic-facing. A helical transmembrane segment spans residues 315-337 (LNIIDFVAILPFYLEVGLSGLSS). Residues 346–368 (FLRVVRFVRILRIFKLTRHFVGL) form a helical; Voltage-sensor membrane-spanning segment. The Cytoplasmic segment spans residues 369–381 (RVLGHTLRASTNE). The helical transmembrane segment at 382–401 (FLLLIIFLALGVLIFATMIY) threads the bilayer. Positions 437, 438, 439, and 440 each coordinate K(+). The Selectivity filter signature appears at 437–442 (TLGYGD). A helical membrane pass occupies residues 451-473 (MLVGALCALAGVLTIAMPVPVIV). Residues 474 to 638 (NNFGMYYSLA…RSRSPIPSIL (165 aa)) lie on the Cytoplasmic side of the membrane. Positions 538–572 (SVLSGDDSTGSEPPLSPPERLPIRRSSTRDKNRRG) are disordered. Position 564 is a phosphoserine; by PKA (Ser564). Ser600 carries the phosphoserine modification.

The protein belongs to the potassium channel family. C (Shaw) (TC 1.A.1.2) subfamily. Kv3.2/KCNC2 sub-subfamily. As to quaternary structure, homotetramer and heterotetramer with other channel-forming alpha subunits, such as KCNC1. Interacts with KCNC1. Homotetramer or heterotetramer channel activity is regulated by association with modulating ancillary subunits such as KCNE1, KCNE2 and KCNE3, creating a functionally diverse range of channel complexes. Interacts with KCNE1, KCNE2 and KCNE3. Phosphorylated by PKA in cortical synaptosomes. cAMP-dependent phosphorylation inhibits channel activity. Histamine H2 receptor- and PKA-induced phosphorylation extends action potential spike duration, reduces action potential spike amplitude, sustains maximum firing frequency in hippocampal interneurons; also reduces the incidence of high-frequency oscillations in hippocampal CA3 pyramidal cell layers. Expressed in neurons of the visual cortex during postnatal development. Expressed in neurons of the globus pallidus at postnatal age day 7 (P7), onward. Expressed in thalamic relay neurons. Expressed in neurons in layer IV and deeper cortical layers of the neocortex. Expressed in hippocampal interneurons. Expressed in nonpyramidal interneurons in the basolateral amygdala. Expressed in retinal ganglion cells (at protein level). Widely expressed in the brain. Expressed in numerous thalamic relay neurons throughout the dorsal thalamus. Expressed in interneurons of the deep layers V-VI of the cerebral cortex, the CA1 and CA3 pyramidal and dentate gyrus (DG) granule cells of the hippocampus, in neurons of the caudate-putamen, globus pallidus and subthalamic nucleus. Also expressed in the optic layer of interior colliculus, the inferior colliculus, the red nucleus, the medial geniculate, the ventral lateral lemiscus, the reticulotegmental nucleus and in the deep cerebellar nuclei. Expressed in globus pallidus (GP) neurons.

The protein resides in the cell membrane. Its subcellular location is the membrane. It is found in the perikaryon. It localises to the cell projection. The protein localises to the axon. The protein resides in the synapse. Its subcellular location is the synaptosome. It is found in the dendrite. It localises to the postsynaptic cell membrane. The protein localises to the presynaptic cell membrane. The protein resides in the apical cell membrane. Its subcellular location is the basolateral cell membrane. It carries out the reaction K(+)(in) = K(+)(out). Its activity is regulated as follows. Inhibited by Stichodactyla helianthus peptide ShK. Inhibited by millimolar levels of tetraethylammonium (TEA). Contrary to other channels, inhibited only by millimolar levels of 4-aminopyridine (4-AP). Functionally, voltage-gated potassium channel that mediates transmembrane potassium transport in excitable membranes, primarily in the brain. Contributes to the regulation of the fast action potential repolarization and in sustained high-frequency firing in neurons of the central nervous system. Homotetramer channels mediate delayed-rectifier voltage-dependent potassium currents that activate rapidly at high-threshold voltages and inactivate slowly. Forms tetrameric channels through which potassium ions pass in accordance with their electrochemical gradient. The channel alternates between opened and closed conformations in response to the voltage difference across the membrane. Can form functional homotetrameric channels and heterotetrameric channels that contain variable proportions of KCNC1, and possibly other family members as well; channel properties depend on the type of alpha subunits that are part of the channel. Channel properties may be modulated either by the association with ancillary subunits, such as KCNE1, KCNE2 and KCNE3 or indirectly by nitric oxide (NO) through a cGMP- and PKG-mediated signaling cascade, slowing channel activation and deactivation of delayed rectifier potassium channels. Contributes to fire sustained trains of very brief action potentials at high frequency in retinal ganglion cells, thalamocortical and suprachiasmatic nucleus (SCN) neurons and in hippocampal and neocortical interneurons. Sustained maximal action potential firing frequency in inhibitory hippocampal interneurons is negatively modulated by histamine H2 receptor activation in a cAMP- and protein kinase (PKA) phosphorylation-dependent manner. Plays a role in maintaining the fidelity of synaptic transmission in neocortical GABAergic interneurons by generating action potential (AP) repolarization at nerve terminals, thus reducing spike-evoked calcium influx and GABA neurotransmitter release. Required for long-range synchronization of gamma oscillations over distance in the neocortex. Contributes to the modulation of the circadian rhythm of spontaneous action potential firing in suprachiasmatic nucleus (SCN) neurons in a light-dependent manner. This is Voltage-gated potassium channel KCNC2 from Rattus norvegicus (Rat).